We begin with the raw amino-acid sequence, 1179 residues long: ATP-dependent helicase/deoxyribonuclease subunit B (1179 aa).

It belongs to the helicase family. AddB/RexB type 2 subfamily. As to quaternary structure, heterodimer of AddA and RexB. The cofactor is Mg(2+).

The heterodimer acts as both an ATP-dependent DNA helicase and an ATP-dependent, dual-direction single-stranded exonuclease. Recognizes the chi site generating a DNA molecule suitable for the initiation of homologous recombination. This subunit has 5' -&gt; 3' nuclease activity but not helicase activity. This is ATP-dependent helicase/deoxyribonuclease subunit B from Lacticaseibacillus paracasei (strain ATCC 334 / BCRC 17002 / CCUG 31169 / CIP 107868 / KCTC 3260 / NRRL B-441) (Lactobacillus paracasei).